The following is a 101-amino-acid chain: Small ribosomal subunit protein bS18c (101 aa).

This sequence belongs to the bacterial ribosomal protein bS18 family. Part of the 30S ribosomal subunit.

It is found in the plastid. The protein localises to the chloroplast. This Vitis vinifera (Grape) protein is Small ribosomal subunit protein bS18c.